The chain runs to 98 residues: MPVVYVNIFLAFIVSLVGLLIYRSHLMSSLLCLEGMMLSLFVMLTVTVLNNHFTLANMAPIILLVFAACEAALGLSLLVMVSNTYGTDYVQNLNLLQC.

The next 3 helical transmembrane spans lie at 1–21 (MPVV…GLLI), 29–49 (SLLC…VTVL), and 61–81 (IILL…LVMV).

Belongs to the complex I subunit 4L family. In terms of assembly, core subunit of respiratory chain NADH dehydrogenase (Complex I) which is composed of 45 different subunits.

Its subcellular location is the mitochondrion inner membrane. The enzyme catalyses a ubiquinone + NADH + 5 H(+)(in) = a ubiquinol + NAD(+) + 4 H(+)(out). Its function is as follows. Core subunit of the mitochondrial membrane respiratory chain NADH dehydrogenase (Complex I) which catalyzes electron transfer from NADH through the respiratory chain, using ubiquinone as an electron acceptor. Part of the enzyme membrane arm which is embedded in the lipid bilayer and involved in proton translocation. The polypeptide is NADH-ubiquinone oxidoreductase chain 4L (MT-ND4L) (Ursus maritimus (Polar bear)).